Here is a 352-residue protein sequence, read N- to C-terminus: UDP-N-acetylglucosamine--N-acetylmuramyl-(pentapeptide) pyrophosphoryl-undecaprenol N-acetylglucosamine transferase (352 aa).

UDP-N-acetyl-alpha-D-glucosamine contacts are provided by Ser195 and Gln287.

This sequence belongs to the glycosyltransferase 28 family. MurG subfamily.

Its subcellular location is the cell membrane. The catalysed reaction is Mur2Ac(oyl-L-Ala-gamma-D-Glu-L-Lys-D-Ala-D-Ala)-di-trans,octa-cis-undecaprenyl diphosphate + UDP-N-acetyl-alpha-D-glucosamine = beta-D-GlcNAc-(1-&gt;4)-Mur2Ac(oyl-L-Ala-gamma-D-Glu-L-Lys-D-Ala-D-Ala)-di-trans,octa-cis-undecaprenyl diphosphate + UDP + H(+). The protein operates within cell wall biogenesis; peptidoglycan biosynthesis. Functionally, cell wall formation. Catalyzes the transfer of a GlcNAc subunit on undecaprenyl-pyrophosphoryl-MurNAc-pentapeptide (lipid intermediate I) to form undecaprenyl-pyrophosphoryl-MurNAc-(pentapeptide)GlcNAc (lipid intermediate II). This Streptococcus pneumoniae serotype 19F (strain G54) protein is UDP-N-acetylglucosamine--N-acetylmuramyl-(pentapeptide) pyrophosphoryl-undecaprenol N-acetylglucosamine transferase.